We begin with the raw amino-acid sequence, 108 residues long: Hrp pili protein HrpA (108 aa).

Over residues 41–56 (NTGSTDSIDATRSSIS) the composition is skewed to polar residues. Residues 41–72 (NTGSTDSIDATRSSISKGDAKSAELDGTANEE) form a disordered region.

This sequence belongs to the HrpA type 1 family.

The protein resides in the secreted. It localises to the fimbrium. Functionally, major structural protein of the hrp pilus, which is a component of the type III secretion system (T3SS, Hrp secretion system) required for effector protein delivery, parasitism, and pathogenicity. The hrp pilus functions as a conduit for protein delivery into the host cell. Also, affects the expression of T3SS-associated genes. Required for full expression of genes that encode regulatory, secretion, and effector proteins of the T3SS. HrpA-mediated gene regulation apparently is through effect on the mRNA level of hrpR and hrpS. This chain is Hrp pili protein HrpA (hrpA), found in Pseudomonas savastanoi pv. phaseolicola (Pseudomonas syringae pv. phaseolicola).